The sequence spans 516 residues: High-affinity nitrate transporter 2.3 (516 aa).

The next 12 membrane-spanning stretches (helical) occupy residues 52–72, 76–96, 112–132, 142–162, 172–192, 209–229, 265–285, 299–319, 335–354, 367–387, 395–415, and 425–445; these read WFSF…LPLI, LGLT…GAVF, LASA…SIIQ, FFTG…SSMF, GVAG…MPLV, IAFF…LAFG, WILA…DNVV, TAGL…PGGG, LWGL…VLGI, VLFS…VPFV, ISGM…YIFF, and GIKY…LIYF. Residues 489–516 form a disordered region; sequence SVREGGRSSANGGQPRHTVPVDASPAGV.

The protein belongs to the major facilitator superfamily. Nitrate/nitrite porter (TC 2.A.1.8) family. As to quaternary structure, heterotetramer composed of two NRT2.3 and two NAR2.1. Isoform 1 interacts with NAR2.1, but not isoform 2. Expressed in the stelar cells of both primary and lateral roots, particularly at the site of lateral root emergence, root-shoot junction zone, vascular tissues of adventitious root primordia, leaves, germ tips and seed scutellum.

The protein resides in the cell membrane. Involved in nitrate transport, but does not seem to be able to mediate transport by its own. Acts as a dual component transporter with NAR2.1. Imports nitrate with high affinity when expressed with NAR2.1 in a heterologous system (Xenopus oocytes). Plays a key role in long-distance nitrate transport from root to shoot particularly at low external nitrate supply. This chain is High-affinity nitrate transporter 2.3 (NRT2.3), found in Oryza sativa subsp. japonica (Rice).